Reading from the N-terminus, the 66-residue chain is Large ribosomal subunit protein bL35 (66 aa).

Basic residues predominate over residues Met1 to Arg26. 2 disordered regions span residues Met1–Tyr28 and Lys36–Gln55.

This sequence belongs to the bacterial ribosomal protein bL35 family.

This chain is Large ribosomal subunit protein bL35, found in Macrococcus caseolyticus (strain JCSC5402) (Macrococcoides caseolyticum).